The chain runs to 265 residues: Acrosomal protein SP-10 (265 aa).

A signal peptide spans 1–21 (MNRFLLLMSLYLLGSARGTSS). A disordered region spans residues 62-181 (LNTLSEHGSS…EQASGAPISS (120 aa)). 16 consecutive repeat copies span residues 66-70 (SEHGS), 71-75 (SEHGS), 85-88 (SGEH), 91-95 (SEHAS), 110-114 (VGEQP), 115-119 (SGEQP), 120-123 (SGEH), 125-129 (SGEQP), 135-139 (SGEQP), 140-144 (SDEQP), 145-148 (SGEH), 150-154 (SGEQP), 155-159 (SGEQA), 160-164 (SGEQP), 165-168 (SGEH), and 170-174 (SGEQA). The 3 X 5 AA repeats of S-E-H-[GA]-S stretch occupies residues 66–95 (SEHGSSEHGSSKHTVAEHTSGEHAESEHAS). Residues 69 to 110 (GSSEHGSSKHTVAEHTSGEHAESEHASGEPAATEHAEGEHTV) show a composition bias toward basic and acidic residues. The 4 X 4 AA repeats of S-G-E-H stretch occupies residues 85-168 (SGEHAESEHA…ASGEQPSGEH (84 aa)). Residues 110–174 (VGEQPSGEQP…SGEHASGEQA (65 aa)) are 9 X 5 AA repeats of [SV]-G-E-Q-[PSA]. A compositionally biased stretch (polar residues) spans 152–163 (EQPSGEQASGEQ). A glycan (N-linked (GlcNAc...) asparagine) is linked at Asn258.

In terms of tissue distribution, testis.

Its subcellular location is the cytoplasmic vesicle. The protein resides in the secretory vesicle. The protein localises to the acrosome. The sequence is that of Acrosomal protein SP-10 (ACRV1) from Homo sapiens (Human).